Consider the following 403-residue polypeptide: Protein WVD2-like 6 (403 aa).

Disordered regions lie at residues 1–179 and 254–403; these read MDSE…ALPN and LKKI…AVEP. Polar residues predominate over residues 25 to 56; sequence GDSSNGNGGTSENLECCSTQHPMEASEGTQNE. Over residues 103–118 the composition is skewed to low complexity; the sequence is SVAPNVKPVKSPKSKS. Serine 113 carries the post-translational modification Phosphoserine. Basic and acidic residues-rich tracts occupy residues 120 to 132, 139 to 153, and 162 to 171; these read NGRE…HGNH, GTRD…RKQV, and QYPKEDDGKP. A compositionally biased stretch (basic residues) spans 263–273; sequence KSPKLGRKKTN. Residues 336-348 show a composition bias toward low complexity; it reads KVAPAKAVTASTK. Residues 385-394 are compositionally biased toward basic and acidic residues; sequence VNEDRNESHM.

Belongs to the TPX2 family. Expressed in seedlings.

It is found in the cytoplasm. It localises to the cytoskeleton. Microtubule-associated protein (MAP) that regulates the orientation of interphase cortical microtubules. The chain is Protein WVD2-like 6 from Arabidopsis thaliana (Mouse-ear cress).